Reading from the N-terminus, the 396-residue chain is MKRRHLPPVLVLLLLSILSLSFRRRLLVLQGPPSSSSSSRHPVGDPLLRRLAADDGAGSSQILAEAAALFANASISTFPSLGNHHRLLYLRMPYAFSPRAPPRPKTVARLRVPVDALPPDGKLLASFRASLGSFLAARRRRGRGGNVAGVMRDLAGVLGRRYRTCAVVGNSGVLLGSGRGPQIDAHDLVIRLNNARVAGFAADVGVKTSLSFVNSNILHICAARNAITRAACGCHPYGGEVPMAMYVCQPAHLLDALICNATATPSSPFPLLVTDARLDALCARIAKYYSLRRFVSATGEPAANWTRRHDERYFHYSSGMQAVVMALGVCDEVSLFGFGKSPGAKHHYHTNQKKELDLHDYEAEYDFYGDLQARPAAVPFLDDAHGFTVPPVRLHR.

Residues 1-6 (MKRRHL) lie on the Cytoplasmic side of the membrane. A helical; Signal-anchor for type II membrane protein membrane pass occupies residues 7-23 (PPVLVLLLLSILSLSFR). Residues 24–396 (RRLLVLQGPP…FTVPPVRLHR (373 aa)) lie on the Lumenal side of the membrane. Asn72, Asn260, and Asn304 each carry an N-linked (GlcNAc...) asparagine glycan.

This sequence belongs to the glycosyltransferase 29 family.

The protein resides in the golgi apparatus membrane. Its function is as follows. Does not possess sialyltransferase-like activity in vitro. The protein is Sialyltransferase-like protein 2 of Oryza sativa subsp. indica (Rice).